The chain runs to 220 residues: GILT-like protein CBG03282 (220 aa).

The N-terminal stretch at 1 to 22 (MTIIRTLFVYYSFLFILVLCSS) is a signal peptide. N-linked (GlcNAc...) asparagine glycosylation occurs at asparagine 131.

It belongs to the GILT family.

Its subcellular location is the secreted. This chain is GILT-like protein CBG03282, found in Caenorhabditis briggsae.